A 218-amino-acid polypeptide reads, in one-letter code: Adenylate kinase (218 aa).

Residue 10 to 15 participates in ATP binding; that stretch reads GAGKGT. Residues 30–59 form an NMP region; that stretch reads STGDMLRAAVKAGTPLGLQAKAVMDAGQLV. Residues threonine 31, arginine 36, 57–59, 85–88, and glutamine 92 contribute to the AMP site; these read QLV and GFPR. The segment at 122-159 is LID; the sequence is GRRSHPASGRTYHVKFNPPKVEGKDDVTGEPLVQREDD. ATP contacts are provided by residues arginine 123 and 132–133; that span reads TY. The segment at 127–150 is disordered; that stretch reads PASGRTYHVKFNPPKVEGKDDVTG. AMP-binding residues include arginine 156 and arginine 167. Position 203 (glycine 203) interacts with ATP.

The protein belongs to the adenylate kinase family. Monomer.

It is found in the cytoplasm. The enzyme catalyses AMP + ATP = 2 ADP. It participates in purine metabolism; AMP biosynthesis via salvage pathway; AMP from ADP: step 1/1. Functionally, catalyzes the reversible transfer of the terminal phosphate group between ATP and AMP. Plays an important role in cellular energy homeostasis and in adenine nucleotide metabolism. In Acidovorax ebreus (strain TPSY) (Diaphorobacter sp. (strain TPSY)), this protein is Adenylate kinase.